The chain runs to 304 residues: Pseudouridine-5'-phosphate glycosidase (304 aa).

E25 serves as the catalytic Proton donor. 2 residues coordinate substrate: K86 and V106. D138 serves as a coordination point for Mn(2+). Position 140–142 (140–142 (SAD)) interacts with substrate. K159 functions as the Nucleophile in the catalytic mechanism.

It belongs to the pseudouridine-5'-phosphate glycosidase family. As to quaternary structure, homotrimer. Mn(2+) is required as a cofactor.

The catalysed reaction is D-ribose 5-phosphate + uracil = psi-UMP + H2O. In terms of biological role, catalyzes the reversible cleavage of pseudouridine 5'-phosphate (PsiMP) to ribose 5-phosphate and uracil. Functions biologically in the cleavage direction, as part of a pseudouridine degradation pathway. The protein is Pseudouridine-5'-phosphate glycosidase of Lysinibacillus sphaericus (strain C3-41).